The following is a 50-amino-acid chain: YRGGYTGPIPRPPPIGRPPLRLVVCACYRLSVSDARNCCIKFGSCCHLVK.

3 cysteine pairs are disulfide-bonded: C25–C38, C27–C45, and C39–C46.

In terms of tissue distribution, higher expression in hemocytes and to a lesser extent in heart, testis, gills, intestine, lymphoid organ and hepatopancreas. Traces in eyes and subcuticular epithelium. Not present in the brain.

The protein localises to the cytoplasmic granule. Functionally, antibacterial activity against M.luteus and E.coli bacteria. Antifungal activity against N.crassa and F.oxysporum. Presents chitin-binding activity. This chain is Penaeidin-1, found in Penaeus vannamei (Whiteleg shrimp).